The sequence spans 353 residues: UPF0283 membrane protein KPK_3110 (353 aa).

Transmembrane regions (helical) follow at residues 70–90, 99–119, and 213–233; these read MVSA…VQWT, WIAL…VGSV, and ESTL…FIAW.

The protein belongs to the UPF0283 family.

Its subcellular location is the cell inner membrane. The sequence is that of UPF0283 membrane protein KPK_3110 from Klebsiella pneumoniae (strain 342).